The chain runs to 276 residues: F-box/LRR-repeat protein 20 (276 aa).

Residues 22 to 68 enclose the F-box domain; that stretch reads AVINKKLPKELLLRIFSFLDVVTLCRCAQVSRAWNVLALDGSNWQRI. LRR repeat units follow at residues 74 to 100, 101 to 126, 127 to 152, 153 to 178, 179 to 204, 205 to 230, 231 to 256, and 257 to 276; these read QRDI…SLRG, CLGV…SLNG, CTKT…DLAS, CTSI…NISW, CDQV…FLKG, CTQL…NLQT, CLQI…CASG, and CSNI…PRLR.

As to quaternary structure, interacts with SKP1 and CUL1. As to expression, widely expressed, with highest expression in skeletal muscle, heart and brain.

It localises to the cytoplasm. Functionally, substrate-recognition component of the SCF (SKP1-CUL1-F-box protein)-type E3 ubiquitin ligase complex. Role in neural transmission. The polypeptide is F-box/LRR-repeat protein 20 (Fbxl20) (Rattus norvegicus (Rat)).